Reading from the N-terminus, the 555-residue chain is Potassium-transporting ATPase potassium-binding subunit (555 aa).

A run of 10 helical transmembrane segments spans residues 2-22 (IWVAVIITMLLFILVAKPTGV), 60-80 (QYALSLVLLNGFMIVVVYFIF), 130-150 (IGITFLMFAAPATTLALVMAF), 173-193 (VFLPIAFIAALVFVALGVPQT), 246-266 (MSNILQMMLMMLLPTALPFTY), 278-298 (ILFVSLFMVFLLGFITITTSE), 374-394 (AGFVNIIMYAIIAVFISGLMV), 412-432 (LIAVTILFHPLLILGFSALAL), 483-503 (LVMFLGRYFSLITMLAVAASL), and 525-545 (GIFIGTIVIVGALTFFPMLVL).

Belongs to the KdpA family. As to quaternary structure, the system is composed of three essential subunits: KdpA, KdpB and KdpC.

It localises to the cell membrane. Functionally, part of the high-affinity ATP-driven potassium transport (or Kdp) system, which catalyzes the hydrolysis of ATP coupled with the electrogenic transport of potassium into the cytoplasm. This subunit binds the extracellular potassium ions and delivers the ions to the membrane domain of KdpB through an intramembrane tunnel. In Bacillus cereus (strain B4264), this protein is Potassium-transporting ATPase potassium-binding subunit.